The sequence spans 718 residues: Protein Smaug homolog 1 (718 aa).

S168 carries the phosphoserine modification. A disordered region spans residues A278–D310. The SAM domain occupies S323–E396. Disordered stretches follow at residues A417–H474 and N572–I601. S420 carries the phosphoserine modification. Position 424 is a phosphothreonine (T424). Over residues G453–G466 the composition is skewed to low complexity. R573 carries the omega-N-methylarginine modification. S580 carries the phosphoserine modification.

This sequence belongs to the SMAUG family.

Its subcellular location is the cytoplasm. It localises to the cell projection. The protein localises to the dendrite. It is found in the synapse. The protein resides in the synaptosome. Functionally, acts as a translational repressor of SRE-containing messengers. This Macaca fascicularis (Crab-eating macaque) protein is Protein Smaug homolog 1 (SAMD4A).